The primary structure comprises 322 residues: Gluconeogenesis factor (322 aa).

The protein belongs to the gluconeogenesis factor family.

The protein localises to the cytoplasm. Functionally, required for morphogenesis under gluconeogenic growth conditions. The polypeptide is Gluconeogenesis factor (Listeria innocua serovar 6a (strain ATCC BAA-680 / CLIP 11262)).